Reading from the N-terminus, the 495-residue chain is ATP synthase subunit alpha, chloroplastic (495 aa).

170 to 177 (GDRQTGKT) provides a ligand contact to ATP.

This sequence belongs to the ATPase alpha/beta chains family. F-type ATPases have 2 components, CF(1) - the catalytic core - and CF(0) - the membrane proton channel. CF(1) has five subunits: alpha(3), beta(3), gamma(1), delta(1), epsilon(1). CF(0) has four main subunits: a, b, b' and c.

The protein localises to the plastid. It is found in the chloroplast thylakoid membrane. It carries out the reaction ATP + H2O + 4 H(+)(in) = ADP + phosphate + 5 H(+)(out). Functionally, produces ATP from ADP in the presence of a proton gradient across the membrane. The alpha chain is a regulatory subunit. The chain is ATP synthase subunit alpha, chloroplastic from Cyanidioschyzon merolae (strain NIES-3377 / 10D) (Unicellular red alga).